The chain runs to 335 residues: Ketol-acid reductoisomerase (NADP(+)) 2 (335 aa).

Residues 1–180 enclose the KARI N-terminal Rossmann domain; it reads MKTYYEQDAN…GCTRAGVIET (180 aa). Residues 24 to 27, Arg47, Ser51, and 81 to 84 contribute to the NADP(+) site; these read YGSQ and DEQQ. His106 is an active-site residue. Gly132 contacts NADP(+). Residues 181–326 form the KARI C-terminal knotted domain; sequence TFQEETETDL…EELREMMSWI (146 aa). Asp189, Glu193, Glu225, and Glu229 together coordinate Mg(2+). Position 250 (Ser250) interacts with substrate.

The protein belongs to the ketol-acid reductoisomerase family. Requires Mg(2+) as cofactor.

It carries out the reaction (2R)-2,3-dihydroxy-3-methylbutanoate + NADP(+) = (2S)-2-acetolactate + NADPH + H(+). The catalysed reaction is (2R,3R)-2,3-dihydroxy-3-methylpentanoate + NADP(+) = (S)-2-ethyl-2-hydroxy-3-oxobutanoate + NADPH + H(+). It functions in the pathway amino-acid biosynthesis; L-isoleucine biosynthesis; L-isoleucine from 2-oxobutanoate: step 2/4. It participates in amino-acid biosynthesis; L-valine biosynthesis; L-valine from pyruvate: step 2/4. Its function is as follows. Involved in the biosynthesis of branched-chain amino acids (BCAA). Catalyzes an alkyl-migration followed by a ketol-acid reduction of (S)-2-acetolactate (S2AL) to yield (R)-2,3-dihydroxy-isovalerate. In the isomerase reaction, S2AL is rearranged via a Mg-dependent methyl migration to produce 3-hydroxy-3-methyl-2-ketobutyrate (HMKB). In the reductase reaction, this 2-ketoacid undergoes a metal-dependent reduction by NADPH to yield (R)-2,3-dihydroxy-isovalerate. The chain is Ketol-acid reductoisomerase (NADP(+)) 2 from Bacillus thuringiensis subsp. konkukian (strain 97-27).